The chain runs to 210 residues: MTEPTIKLNYHKTRFLTSAPDIRHLPEDNGIEIAFAGRSNAGKSTALNALTNQKSLARTSKTPGRTQLINLFEVEPQCKLVDLPGYGYAAVPEQMKLQWQKALGEYLQKRDCLAGIVILMDIRHPLKDLDQQMIEWAVSAQLPVLLLLTKADKLSQVARNKTAKMVNEAILPFQGDIQVEIYSALNKIGVDKLSNKLDSWFAPIFQQEGK.

Residues 29-203 enclose the EngB-type G domain; it reads NGIEIAFAGR…SNKLDSWFAP (175 aa). GTP contacts are provided by residues 37–44, 64–68, 82–85, 149–152, and 181–184; these read GRSNAGKS, GRTQL, DLPG, TKAD, and IYSA. 2 residues coordinate Mg(2+): S44 and T66.

It belongs to the TRAFAC class TrmE-Era-EngA-EngB-Septin-like GTPase superfamily. EngB GTPase family. It depends on Mg(2+) as a cofactor.

In terms of biological role, necessary for normal cell division and for the maintenance of normal septation. This is Probable GTP-binding protein EngB from Haemophilus ducreyi (strain 35000HP / ATCC 700724).